The chain runs to 483 residues: V-type proton ATPase subunit H (483 aa).

Serine 483 carries the post-translational modification Phosphoserine.

The protein belongs to the V-ATPase H subunit family. In terms of assembly, V-ATPase is a heteromultimeric enzyme made up of two complexes: the ATP-hydrolytic V1 complex and the proton translocation V0 complex. The V1 complex consists of three catalytic AB heterodimers that form a heterohexamer, three peripheral stalks each consisting of EG heterodimers, one central rotor including subunits D and F, and the regulatory subunits C and H. The proton translocation complex V0 consists of the proton transport subunit a, a ring of proteolipid subunits c9c'', rotary subunit d, subunits e and f, and the accessory subunits ATP6AP1/Ac45 and ATP6AP2/PRR. Interacts with AP2M1. Interacts with TM9SF4 in colon cancer cells. As to quaternary structure, (Microbial infection) Interacts with HIV-1 Nef protein. (Microbial infection) Interacts with M.tuberculosis PtpA, which blocks V-ATPase trafficking and phagosome acidification. Widely expressed.

The protein resides in the cytoplasmic vesicle. Its subcellular location is the clathrin-coated vesicle membrane. Its function is as follows. Subunit of the V1 complex of vacuolar(H+)-ATPase (V-ATPase), a multisubunit enzyme composed of a peripheral complex (V1) that hydrolyzes ATP and a membrane integral complex (V0) that translocates protons. V-ATPase is responsible for acidifying and maintaining the pH of intracellular compartments and in some cell types, is targeted to the plasma membrane, where it is responsible for acidifying the extracellular environment. Subunit H is essential for V-ATPase activity, but not for the assembly of the complex. Involved in the endocytosis mediated by clathrin-coated pits, required for the formation of endosomes. In Homo sapiens (Human), this protein is V-type proton ATPase subunit H (ATP6V1H).